The following is a 130-amino-acid chain: Type VII secretion system extracellular protein C (130 aa).

It belongs to the EsxC family. In terms of assembly, forms both homodimers and heterodimers with EsxA. Homodimerization is calcium-dependent.

The protein resides in the secreted. This Staphylococcus aureus (strain USA300) protein is Type VII secretion system extracellular protein C.